Here is a 265-residue protein sequence, read N- to C-terminus: Indole-3-glycerol phosphate synthase (265 aa).

It belongs to the TrpC family.

The catalysed reaction is 1-(2-carboxyphenylamino)-1-deoxy-D-ribulose 5-phosphate + H(+) = (1S,2R)-1-C-(indol-3-yl)glycerol 3-phosphate + CO2 + H2O. It functions in the pathway amino-acid biosynthesis; L-tryptophan biosynthesis; L-tryptophan from chorismate: step 4/5. This is Indole-3-glycerol phosphate synthase from Xanthomonas oryzae pv. oryzae (strain MAFF 311018).